The following is a 497-amino-acid chain: UDP-N-acetylmuramoyl-L-alanyl-D-glutamate--2,6-diaminopimelate ligase (497 aa).

Residues Leu-27 and Ser-29 each contribute to the UDP-N-acetyl-alpha-D-muramoyl-L-alanyl-D-glutamate site. 116–122 (GTNGKTT) lines the ATP pocket. UDP-N-acetyl-alpha-D-muramoyl-L-alanyl-D-glutamate-binding positions include Asn-157, 158 to 159 (TT), Ser-185, Gln-191, and Arg-193. Lys-225 is modified (N6-carboxylysine). Meso-2,6-diaminopimelate-binding positions include Arg-392, 416–419 (DNPR), Gly-467, and Glu-471. Residues 416-419 (DNPR) carry the Meso-diaminopimelate recognition motif motif.

The protein belongs to the MurCDEF family. MurE subfamily. Requires Mg(2+) as cofactor. Post-translationally, carboxylation is probably crucial for Mg(2+) binding and, consequently, for the gamma-phosphate positioning of ATP.

The protein resides in the cytoplasm. The enzyme catalyses UDP-N-acetyl-alpha-D-muramoyl-L-alanyl-D-glutamate + meso-2,6-diaminopimelate + ATP = UDP-N-acetyl-alpha-D-muramoyl-L-alanyl-gamma-D-glutamyl-meso-2,6-diaminopimelate + ADP + phosphate + H(+). It participates in cell wall biogenesis; peptidoglycan biosynthesis. Its function is as follows. Catalyzes the addition of meso-diaminopimelic acid to the nucleotide precursor UDP-N-acetylmuramoyl-L-alanyl-D-glutamate (UMAG) in the biosynthesis of bacterial cell-wall peptidoglycan. The sequence is that of UDP-N-acetylmuramoyl-L-alanyl-D-glutamate--2,6-diaminopimelate ligase from Buchnera aphidicola subsp. Schizaphis graminum (strain Sg).